The primary structure comprises 342 residues: UDP-glucuronic acid decarboxylase 3 (342 aa).

The segment covering 1–11 (MAATSEKQNTT) has biased composition (polar residues). Positions 1–22 (MAATSEKQNTTKPPPSPSPLRN) are disordered. 61–86 (DNYFTGSKENLKKWIGHPRFELIRHD) contacts NAD(+). Residue Arg170 coordinates substrate. Tyr173 serves as the catalytic Proton acceptor. Residue 173 to 177 (YDEGK) participates in NAD(+) binding. A substrate-binding site is contributed by Asn202. Arg214 is an NAD(+) binding site. Substrate is bound by residues 215–219 (VVSNF), 232–239 (QKPGTQTR), and 299–303 (DPRQR).

It belongs to the NAD(P)-dependent epimerase/dehydratase family. UDP-glucuronic acid decarboxylase subfamily. Requires NAD(+) as cofactor. As to expression, ubiquitous.

The protein localises to the cytoplasm. It catalyses the reaction UDP-alpha-D-glucuronate + H(+) = UDP-alpha-D-xylose + CO2. It functions in the pathway nucleotide-sugar biosynthesis; UDP-alpha-D-xylose biosynthesis; UDP-alpha-D-xylose from UDP-alpha-D-glucuronate: step 1/1. Functionally, catalyzes the NAD-dependent decarboxylation of UDP-glucuronic acid to UDP-xylose. Necessary for the biosynthesis of the core tetrasaccharide in glycosaminoglycan biosynthesis. The protein is UDP-glucuronic acid decarboxylase 3 (UXS3) of Arabidopsis thaliana (Mouse-ear cress).